A 589-amino-acid chain; its full sequence is Pentalenolactone D synthase (589 aa).

FAD is bound by residues 60-61, 82-83, 90-91, 102-103, Tyr108, Val152, and Met491; these read IG, DE, TW, and DV.

It belongs to the FAD-binding monooxygenase family. Requires FAD as cofactor.

It carries out the reaction 1-deoxy-11-oxopentalenate + NADPH + O2 + H(+) = pentalenolactone D + NADP(+) + H2O. It functions in the pathway antibiotic biosynthesis; pentalenolactone biosynthesis. Catalyzes the flavin-dependent Baeyer-Villiger oxidation of 1-deoxy-11-oxopentalenic acid to pentalenolactone D in the biosynthesis of pentalenolactone antibiotic. This chain is Pentalenolactone D synthase (pntE), found in Streptomyces arenae.